The following is a 346-amino-acid chain: Methylthioribose-1-phosphate isomerase (346 aa).

Substrate is bound by residues 48–50, arginine 91, and glutamine 196; that span reads RGA. Residue aspartate 237 is the Proton donor of the active site. A substrate-binding site is contributed by 247–248; that stretch reads NK.

This sequence belongs to the eIF-2B alpha/beta/delta subunits family. MtnA subfamily.

It carries out the reaction 5-(methylsulfanyl)-alpha-D-ribose 1-phosphate = 5-(methylsulfanyl)-D-ribulose 1-phosphate. The protein operates within amino-acid biosynthesis; L-methionine biosynthesis via salvage pathway; L-methionine from S-methyl-5-thio-alpha-D-ribose 1-phosphate: step 1/6. Its function is as follows. Catalyzes the interconversion of methylthioribose-1-phosphate (MTR-1-P) into methylthioribulose-1-phosphate (MTRu-1-P). The chain is Methylthioribose-1-phosphate isomerase from Thermosipho africanus (strain TCF52B).